We begin with the raw amino-acid sequence, 194 residues long: FMN-dependent NADH:quinone oxidoreductase (194 aa).

Residues Ser-9, 15–17 (SIS), and 85–88 (MYNF) each bind FMN.

It belongs to the azoreductase type 1 family. As to quaternary structure, homodimer. FMN serves as cofactor.

The catalysed reaction is 2 a quinone + NADH + H(+) = 2 a 1,4-benzosemiquinone + NAD(+). It carries out the reaction N,N-dimethyl-1,4-phenylenediamine + anthranilate + 2 NAD(+) = 2-(4-dimethylaminophenyl)diazenylbenzoate + 2 NADH + 2 H(+). Its function is as follows. Quinone reductase that provides resistance to thiol-specific stress caused by electrophilic quinones. Functionally, also exhibits azoreductase activity. Catalyzes the reductive cleavage of the azo bond in aromatic azo compounds to the corresponding amines. This Xanthomonas oryzae pv. oryzae (strain MAFF 311018) protein is FMN-dependent NADH:quinone oxidoreductase.